Reading from the N-terminus, the 613-residue chain is Immunoglobulin superfamily member 8 (613 aa).

A signal peptide spans 1–27; sequence MGALRPTLLPPSLPLLLLLMLGMGCWA. Ig-like C2-type domains follow at residues 28 to 149, 162 to 286, 303 to 424, and 431 to 560; these read REVL…LRVL, PRGR…WAQI, SQLA…EAAS, and PVHV…WYQA. Over 28 to 579 the chain is Extracellular; it reads REVLVPEGPL…VYPYMHALDT (552 aa). A disulfide bridge links Cys-49 with Cys-127. A glycan (N-linked (GlcNAc...) asparagine) is linked at Asn-50. The disordered stretch occupies residues 155–174; it reads VSAAPPGPRGRQAPTSPPRM. Cysteines 186 and 270 form a disulfide. Residues 274–276 carry the EWI motif motif; sequence EWI. Cystine bridges form between Cys-326–Cys-406 and Cys-462–Cys-544. N-linked (GlcNAc...) asparagine glycosylation is found at Asn-327 and Asn-463. Ser-518 carries the post-translational modification Phosphoserine. The helical transmembrane segment at 580–600 threads the bilayer; sequence LFVPLLVGTGVALVTGATVLG. Residues 601-613 lie on the Cytoplasmic side of the membrane; the sequence is TITCCFMKRLRKR. Residues Cys-604 and Cys-605 are each lipidated (S-palmitoyl cysteine).

As to quaternary structure, interacts directly with CD82, CD81/tetraspanin-28 and CD9/tetraspanin-29. Also interacts with integrin alpha-3/beta-1 and integrin alpha-4/beta-1. Interacts with HSPA8; this interaction modulates migratory and antigen-presenting capacities of dendritic cells. Expressed in brain, kidney, testis, liver and placenta with moderate expression in all other tissues. Detected on a majority of B-cells, T-cells, and natural killer cells. Expressed on dendritic cells.

The protein localises to the cell membrane. In terms of biological role, member of the immunoglobulin superfamily (IgSF) that links tetraspanin-enriched microdomains to the actin cytoskeleton and plays several important roles in innate and adaptive immunity. Acts as an inducible receptor of HSPA8 on dendritic cells to enhance the CCL21/SLC-dependent migration of activated mature dendritic cells while attenuating their antigen-specific stimulatory capacities. In complex with alpha-actinins ACTN1 and ACTN4, regulates actin dynamics in the immune synapse and subsequent T-cell activation. Inhibits the entry of several viruses such as hepatitis C Virus (HCV) or HIV-1. Mechanistically, promotes a change in CD81 organization at the plasma membrane by significantly restricting its diffusion which in turn influences CD81 interaction with Claudin-1/CLDN1, preventing CLDN1 from acting as a co-receptor required for HCV entry. Accumulates at the presynaptic terminal, the producer cell side of the virological synapse, to prevent HIV-1 Env-mediated cell-cell fusion. Highly expressed on malignant cells with antigen presentation defects, interacts with NK receptor KIR3DL2 to suppress NK-cell cytotoxicity. May participate in the regulation of neurite outgrowth and maintenance of the neural network in the adult brain. In Homo sapiens (Human), this protein is Immunoglobulin superfamily member 8 (IGSF8).